The sequence spans 122 residues: HLLQFNKMIKFETRKNAIPFYAFYGCYCGWGGRGRPKDATDRCCFVHDCCYGKLAKCNTKWDIYRYSLKSGYITCGKGTWCEEQICECDRVAAECLRRSLSTYKYGYMFYPDSRCRGPSETC.

7 cysteine pairs are disulfide-bonded: Cys-26–Cys-115, Cys-28–Cys-44, Cys-43–Cys-95, Cys-49–Cys-122, Cys-50–Cys-88, Cys-57–Cys-81, and Cys-75–Cys-86. Residues Tyr-27, Gly-29, and Gly-31 each contribute to the Ca(2+) site. The active site involves His-47. Asp-48 serves as a coordination point for Ca(2+). The active site involves Asp-89.

Belongs to the phospholipase A2 family. Group II subfamily. D49 sub-subfamily. As to quaternary structure, heterodimer of one of the acidic (CA1, CA2, CA3 or CA4) and one of the basic (CBa1, CBa2, CBb, CBc or CBd) subunits; non-covalently linked. The acidic subunit is non-toxic, without enzymatic activity and comprises 3 peptides that are cross-linked by 5 disulfide bridges. The basic subunit is toxic, has phospholipase A2 activity and is composed of a single chain. Multiple variants of each subunit give different crotoxin complexes that can be subdivided into 2 classes: (1) those of high toxicity, low PLA2 activity (CBb, CBc and CBd linked with high affinity to any CA) and high stability (K(d)=4.5 nM) and (2) those of moderate toxicity, high PLA2 activity (CBa2 linked with low affinity to any CA) and low stability (K(d)=25 nM). Interacts with crotoxin inhibitor from Crotalus serum (CICS); the interaction leads to dissociation of the CA-CB heterodimer and to inhibition of PLA2 activity of the CB subunit. Interacts with human NBD1 domain of CFTR. It depends on Ca(2+) as a cofactor. Expressed by the venom gland.

It localises to the secreted. The catalysed reaction is a 1,2-diacyl-sn-glycero-3-phosphocholine + H2O = a 1-acyl-sn-glycero-3-phosphocholine + a fatty acid + H(+). Heterodimer CA-CB: Crotoxin is a potent presynaptic neurotoxin that possesses phospholipase A2 (PLA2) activity and exerts a lethal action by blocking neuromuscular transmission. It consists of a non-covalent association of a basic and weakly toxic PLA2 subunit (CBa2, CBb, CBc, or CBd), with a small acidic, non-enzymatic and non-toxic subunit (CA1, CA2, CA3 or CA4). The complex acts by binding to a specific 48-kDa protein (R48) receptor located on presynaptic membranes, forming a transient ternary complex CA-CB-R48, followed by dissociation of the CA-CB complex and release of the CA subunit. At equilibrium, only the CB subunits remain associated with the specific crotoxin receptor. In addition to neurotoxicity, crotoxin has been found to exert myotoxicity, nephrotoxicity, and cardiovascular toxicity. Moreover, anti-inflammatory, immunomodulatory, anti-tumor and analgesic effects of crotoxin have also been reported. Functionally, monomer CBd: The basic subunit of crotoxin is a snake venom phospholipase A2 (PLA2) that exhibits weak neurotoxicity (10-fold less than the heterodimer) and very strong anticoagulant effects by binding to factor Xa (F10) and inhibiting the prothrombinase activity. In addition, it shows the same effects described for the heterodimer and binds the nucleotide-binding domain (NBD1) of CFTR chloride channels and increases the channel current. PLA2 catalyzes the calcium-dependent hydrolysis of the 2-acyl groups in 3-sn-phosphoglycerides. The sequence is that of Phospholipase A2 crotoxin basic subunit CBd from Crotalus durissus terrificus (South American rattlesnake).